Consider the following 405-residue polypeptide: Patatin-like protein 2 (405 aa).

Positions 24 to 230 (LSIDGGGVRG…AANNPTLCAM (207 aa)) constitute a PNPLA domain. The short motif at 28-33 (GGGVRG) is the GXGXXG element. A GXSXG motif is present at residues 66 to 70 (GTSTG). Residue Ser-68 is the Nucleophile of the active site. Asp-217 serves as the catalytic Proton acceptor. The DGA/G motif lies at 217–219 (DGG).

It belongs to the patatin family.

Possesses non-specific lipolytic acyl hydrolase (LAH) activity. Hydrolyzes phospholipids as well as galactolipids. May play a role in disease resistance. This Oryza sativa subsp. indica (Rice) protein is Patatin-like protein 2 (PLP2).